The sequence spans 516 residues: Na(+)/H(+) antiporter NhaB (516 aa).

A run of 12 helical transmembrane segments spans residues 23–43 (LALI…PFVA), 61–80 (CYPL…IGMT), 97–117 (LLLM…LFVF), 120–140 (LLLG…AAAF), 144–164 (FLDA…FYGI), 202–222 (LMMH…VGEP), 238–258 (FFLR…LTCL), 303–323 (ALIG…VGLI), 348–368 (TEAL…AVII), 391–411 (LFYL…VGTV), 447–467 (ATPN…APLI), and 475–495 (VWMA…CVEF).

The protein belongs to the NhaB Na(+)/H(+) (TC 2.A.34) antiporter family.

The protein resides in the cell inner membrane. The enzyme catalyses 2 Na(+)(in) + 3 H(+)(out) = 2 Na(+)(out) + 3 H(+)(in). Na(+)/H(+) antiporter that extrudes sodium in exchange for external protons. This Klebsiella pneumoniae subsp. pneumoniae (strain ATCC 700721 / MGH 78578) protein is Na(+)/H(+) antiporter NhaB.